The chain runs to 879 residues: Prostaglandin F2 receptor negative regulator (879 aa).

The N-terminal stretch at 1 to 21 (MGRPAPRPLLLALLSLAVCRG) is a signal peptide. 2 Ig-like C2-type domains span residues 22 to 129 (RVVR…ATVQ) and 149 to 268 (PSSR…KAVE). Residues 22 to 832 (RVVRVPAGTL…MDVLNAFKYP (811 aa)) lie on the Extracellular side of the membrane. Intrachain disulfides connect Cys-43–Cys-119 and Cys-169–Cys-247. N-linked (GlcNAc...) asparagine glycosylation occurs at Asn-44. The short motif at 89-91 (RGD) is the Cell attachment site element. Thr-271 is modified (phosphothreonine). Ig-like C2-type domains follow at residues 276–389 (PTAL…WHKV), 406–527 (PEYQ…RNSS), 544–662 (ASED…AWSP), and 688–813 (PIFN…AEIH). An intrachain disulfide couples Cys-299 to Cys-373. N-linked (GlcNAc...) asparagine glycosylation is found at Asn-300, Asn-383, and Asn-413. An Endoplasmic reticulum retention signal motif is present at residues 424–427 (PTEL). A disulfide bridge connects residues Cys-429 and Cys-515. Asn-525, Asn-600, Asn-618, and Asn-691 each carry an N-linked (GlcNAc...) asparagine glycan. Residues Cys-571 and Cys-655 are joined by a disulfide bond. The short motif at 703-705 (RGD) is the Cell attachment site element. Cys-711 and Cys-793 are joined by a disulfide. A helical transmembrane segment spans residues 833–853 (LLIGVGLSTVIGLLSCLIGYC). Over 854–879 (SSHWCCKKEVRETRRERRRLMSMEMD) the chain is Cytoplasmic.

Interacts with CD9 and CD81. Part of a complex composed of CD9, CD81 and IGSF8. Also seems to interact with CD63, CD82 and CD151. In terms of tissue distribution, reproductive tissues, lung and heart.

It is found in the endoplasmic reticulum membrane. The protein resides in the golgi apparatus. The protein localises to the trans-Golgi network membrane. Its function is as follows. Inhibits the binding of prostaglandin F2-alpha (PGF2-alpha) to its specific FP receptor, by decreasing the receptor number rather than the affinity constant. Functional coupling with the prostaglandin F2-alpha receptor seems to occur. In myoblasts, associates with tetraspanins CD9 and CD81 to prevent myotube fusion during muscle regeneration. The sequence is that of Prostaglandin F2 receptor negative regulator (Ptgfrn) from Rattus norvegicus (Rat).